The sequence spans 413 residues: tRNA (guanine-N(7)-)-methyltransferase non-catalytic subunit WDR4 (413 aa).

A2 carries the post-translational modification N-acetylalanine. WD repeat units lie at residues 61–100 (TGSD…CLSV), 102–141 (MVVR…GCGR), 145–185 (GHLS…IESF), 188–228 (GHTE…QLQC), and 289–329 (TFPH…WQAA). Residues 380–413 (RLQQQLKKKRQRSPFPGSPEQTKKACPGQSALSC) are disordered. S392 and S412 each carry phosphoserine.

This sequence belongs to the WD repeat TRM82 family. In terms of assembly, non-catalytic component of the METTL1-WDR4 complex, composed of METTL1 and WDR4. Interacts with FEN1; the interaction is direct.

Its subcellular location is the nucleus. It localises to the chromosome. The protein operates within tRNA modification; N(7)-methylguanine-tRNA biosynthesis. Functionally, non-catalytic component of the METTL1-WDR4 methyltransferase complex required for the formation of N(7)-methylguanine in a subset of RNA species, such as tRNAs, mRNAs and microRNAs (miRNAs). In the METTL1-WDR4 methyltransferase complex, WDR4 acts as a scaffold for tRNA-binding. Required for the formation of N(7)-methylguanine at position 46 (m7G46) in a large subset of tRNAs that contain the 5'-RAGGU-3' motif within the variable loop. M7G46 interacts with C13-G22 in the D-loop to stabilize tRNA tertiary structure and protect tRNAs from decay. Also required for the formation of N(7)-methylguanine at internal sites in a subset of mRNAs. Also required for methylation of a specific subset of miRNAs, such as let-7. Acts as a regulator of embryonic stem cell self-renewal and differentiation. Independently of METTL1, also plays a role in genome stability: localizes at the DNA replication site and regulates endonucleolytic activities of FEN1. The sequence is that of tRNA (guanine-N(7)-)-methyltransferase non-catalytic subunit WDR4 from Mus musculus (Mouse).